The primary structure comprises 103 residues: UPF0235 protein Dole_0289 (103 aa).

This sequence belongs to the UPF0235 family.

This chain is UPF0235 protein Dole_0289, found in Desulfosudis oleivorans (strain DSM 6200 / JCM 39069 / Hxd3) (Desulfococcus oleovorans).